The chain runs to 194 residues: Large ribosomal subunit protein bL9 (194 aa).

A compositionally biased stretch (basic and acidic residues) spans 156–167; it reads RGEDISSRREDQ. Residues 156 to 194 form a disordered region; that stretch reads RGEDISSRREDQDAAAEAIAAAGEFFDPDAQQDEEPEQQ. Acidic residues predominate over residues 181-194; that stretch reads FDPDAQQDEEPEQQ.

It belongs to the bacterial ribosomal protein bL9 family.

Its function is as follows. Binds to the 23S rRNA. In Rhodopseudomonas palustris (strain BisB5), this protein is Large ribosomal subunit protein bL9.